Consider the following 217-residue polypeptide: 3,4-dihydroxy-2-butanone 4-phosphate synthase (217 aa).

D-ribulose 5-phosphate contacts are provided by residues 37 to 38, Asp-42, 150 to 154, and Glu-174; these read RE and RGGHT. Glu-38 serves as a coordination point for Mg(2+). His-153 is a binding site for Mg(2+).

The protein belongs to the DHBP synthase family. As to quaternary structure, homodimer. Requires Mg(2+) as cofactor. Mn(2+) serves as cofactor.

It carries out the reaction D-ribulose 5-phosphate = (2S)-2-hydroxy-3-oxobutyl phosphate + formate + H(+). Its pathway is cofactor biosynthesis; riboflavin biosynthesis; 2-hydroxy-3-oxobutyl phosphate from D-ribulose 5-phosphate: step 1/1. In terms of biological role, catalyzes the conversion of D-ribulose 5-phosphate to formate and 3,4-dihydroxy-2-butanone 4-phosphate. This chain is 3,4-dihydroxy-2-butanone 4-phosphate synthase, found in Pectobacterium atrosepticum (strain SCRI 1043 / ATCC BAA-672) (Erwinia carotovora subsp. atroseptica).